We begin with the raw amino-acid sequence, 413 residues long: MSISSASVSPAYRDPLIAQIVERGVAEIFPGGAAALAERLAQADRPLRVKLGIDPTRPDLHLGHSVVLRKLRQFQDAGHVAILLIGDFTALVGDPTGQSEARPRLTPAEVEENARTYLEQAGKILDFETPGRLEVRRNSEWLAHLTLSELIELQAQMTVGQMLAKEDFAQRYQAGTPVYLHEFLYPLLQGYDSVALAADVELGGTDQRFNLLTGRDLQIWKGQAPQFCLTVPLLEGLDGYQKMSKSKNNYVGLTEDPLTMYSKLEKVPDHLVERYFELLTSVPLAELPQDPRQRQILLAKTLVAQFHSPAAAEEAQRTAQALVLDGILAETGSIPTFAIDGLSYPVKLSYILRECGLCKSAAEARRQIQGGAVRLDGQKVEDPDLEFAHASELAGRILQVGKKAFRRLVKGAD.

Positions Pro55–His64 match the 'HIGH' region motif. The short motif at Lys242–Ser246 is the 'KMSKS' region element. Lys245 provides a ligand contact to ATP. The S4 RNA-binding domain maps to Val346–Lys410.

This sequence belongs to the class-I aminoacyl-tRNA synthetase family. TyrS type 2 subfamily. In terms of assembly, homodimer.

It localises to the cytoplasm. It carries out the reaction tRNA(Tyr) + L-tyrosine + ATP = L-tyrosyl-tRNA(Tyr) + AMP + diphosphate + H(+). In terms of biological role, catalyzes the attachment of tyrosine to tRNA(Tyr) in a two-step reaction: tyrosine is first activated by ATP to form Tyr-AMP and then transferred to the acceptor end of tRNA(Tyr). The polypeptide is Tyrosine--tRNA ligase (Synechococcus sp. (strain JA-2-3B'a(2-13)) (Cyanobacteria bacterium Yellowstone B-Prime)).